A 399-amino-acid polypeptide reads, in one-letter code: Elongation factor Tu (399 aa).

In terms of domain architecture, tr-type G spans 10 to 204 (KPHVNIGTIG…AVDASIPEPE (195 aa)). The G1 stretch occupies residues 19–26 (GHVDHGKT). 19 to 26 (GHVDHGKT) contacts GTP. Threonine 26 serves as a coordination point for Mg(2+). The interval 60–64 (GITIN) is G2. The interval 81–84 (DCPG) is G3. GTP-binding positions include 81–85 (DCPGH) and 136–139 (NKCD). Positions 136–139 (NKCD) are G4. Positions 174-176 (SGL) are G5.

It belongs to the TRAFAC class translation factor GTPase superfamily. Classic translation factor GTPase family. EF-Tu/EF-1A subfamily. Monomer.

It localises to the cytoplasm. The enzyme catalyses GTP + H2O = GDP + phosphate + H(+). GTP hydrolase that promotes the GTP-dependent binding of aminoacyl-tRNA to the A-site of ribosomes during protein biosynthesis. The polypeptide is Elongation factor Tu (Synechococcus sp. (strain CC9311)).